Here is a 426-residue protein sequence, read N- to C-terminus: 3-phosphoshikimate 1-carboxyvinyltransferase (426 aa).

3-phosphoshikimate is bound by residues lysine 22, serine 23, and arginine 27. Lysine 22 provides a ligand contact to phosphoenolpyruvate. The phosphoenolpyruvate site is built by glycine 96 and arginine 124. Serine 170, serine 171, glutamine 172, serine 198, aspartate 314, asparagine 337, and lysine 341 together coordinate 3-phosphoshikimate. Glutamine 172 is a phosphoenolpyruvate binding site. Aspartate 314 (proton acceptor) is an active-site residue. Residues arginine 345, arginine 387, and lysine 412 each contribute to the phosphoenolpyruvate site.

The protein belongs to the EPSP synthase family. Monomer.

It localises to the cytoplasm. It catalyses the reaction 3-phosphoshikimate + phosphoenolpyruvate = 5-O-(1-carboxyvinyl)-3-phosphoshikimate + phosphate. It participates in metabolic intermediate biosynthesis; chorismate biosynthesis; chorismate from D-erythrose 4-phosphate and phosphoenolpyruvate: step 6/7. Catalyzes the transfer of the enolpyruvyl moiety of phosphoenolpyruvate (PEP) to the 5-hydroxyl of shikimate-3-phosphate (S3P) to produce enolpyruvyl shikimate-3-phosphate and inorganic phosphate. The polypeptide is 3-phosphoshikimate 1-carboxyvinyltransferase (Shewanella baltica (strain OS155 / ATCC BAA-1091)).